Consider the following 178-residue polypeptide: Large ribosomal subunit protein uL6 (178 aa).

The protein belongs to the universal ribosomal protein uL6 family. Part of the 50S ribosomal subunit.

This protein binds to the 23S rRNA, and is important in its secondary structure. It is located near the subunit interface in the base of the L7/L12 stalk, and near the tRNA binding site of the peptidyltransferase center. This chain is Large ribosomal subunit protein uL6, found in Bacillus licheniformis (strain ATCC 14580 / DSM 13 / JCM 2505 / CCUG 7422 / NBRC 12200 / NCIMB 9375 / NCTC 10341 / NRRL NRS-1264 / Gibson 46).